The sequence spans 532 residues: Probable inorganic phosphate transporter 1-9 (532 aa).

The Cytoplasmic portion of the chain corresponds to 1–22 (MPELSLLSALDAARIQWYHFKA). A helical membrane pass occupies residues 23 to 43 (IIVAGMGLFTDAYDLFCIAPI). Topologically, residues 44-62 (MKMISQIYYHKDSIGTALL) are extracellular. Residues 63–83 (STSYAIALLGTALGQLIFGYL) form a helical membrane-spanning segment. The Cytoplasmic segment spans residues 84 to 91 (GDRVGRRK). The helical transmembrane segment at 92–112 (VYGLSLLIMVFSSFGCGFSVC) threads the bilayer. Over 113-124 (TTRRSCVMVSLG) the chain is Extracellular. Residues 125-145 (FFRFVLGLGIGGDYPLSATIM) traverse the membrane as a helical segment. The Cytoplasmic portion of the chain corresponds to 146-154 (SEFANKRTR). The chain crosses the membrane as a helical span at residues 155–175 (GAFIAAVFSMQGLGILMSSAV). Residues 176-207 (TMVVCLAFKNAGEGSSEKTNVAGLETLAPPES) lie on the Extracellular side of the membrane. Residues 208-228 (DIAWRLILMIGALPAALTFYW) form a helical membrane-spanning segment. Residues 229-292 (RMLMPETARY…KLFSRRFLSL (64 aa)) are Cytoplasmic-facing. A helical membrane pass occupies residues 293–313 (HGRDLFAASANWFLVDVVFYT). The Extracellular segment spans residues 314–343 (SNLLLSQIFNFSNKPLNSTNVYDSAFEVAK). Residues 344-364 (LAAIVAACSTIPGYWFTVYFI) form a helical membrane-spanning segment. At 365 to 371 (DKIGRVK) the chain is on the cytoplasmic side. Residues 372 to 392 (IQMMGFFLMAVVYLVAGIPYS) traverse the membrane as a helical segment. At 393–406 (WYWSKHEKTNKGFM) the chain is on the extracellular side. A helical transmembrane segment spans residues 407–427 (VLYGLIFFFSNFGPNTTTFII). Over 428-441 (PAELFPARFRSTCH) the chain is Cytoplasmic. Residues 442–462 (GISGAAGKFGAIVGTVGFLWA) traverse the membrane as a helical segment. Residues 463–478 (TRHHEEDGFPDVKRVR) are Extracellular-facing. Residues 479 to 499 (IAFLILGGVCIAGMIVTYLFT) form a helical membrane-spanning segment. Residues 500 to 532 (RETMGRSLEENEDEIVSTSAGSSPANELLRRQY) lie on the Cytoplasmic side of the membrane. Residues 509 to 532 (ENEDEIVSTSAGSSPANELLRRQY) are disordered. Residues 515–524 (VSTSAGSSPA) show a composition bias toward polar residues.

This sequence belongs to the major facilitator superfamily. Phosphate:H(+) symporter (TC 2.A.1.9) family.

It is found in the membrane. Its function is as follows. High-affinity transporter for external inorganic phosphate. This is Probable inorganic phosphate transporter 1-9 (PHT1-9) from Arabidopsis thaliana (Mouse-ear cress).